The chain runs to 437 residues: tRNA-2-methylthio-N(6)-dimethylallyladenosine synthase (437 aa).

Residues 1 to 115 (MKVYIETMGC…ISQVIHKEKA (115 aa)) enclose the MTTase N-terminal domain. [4Fe-4S] cluster is bound by residues Cys-10, Cys-46, Cys-78, Cys-148, Cys-152, and Cys-155. In terms of domain architecture, Radical SAM core spans 134–367 (KKAQIRSLLN…QNRHKEILEE (234 aa)). Positions 370–436 (KLEVGKTHVV…KGRLMATTKG (67 aa)) constitute a TRAM domain.

The protein belongs to the methylthiotransferase family. MiaB subfamily. As to quaternary structure, monomer. The cofactor is [4Fe-4S] cluster.

The protein localises to the cytoplasm. It carries out the reaction N(6)-dimethylallyladenosine(37) in tRNA + (sulfur carrier)-SH + AH2 + 2 S-adenosyl-L-methionine = 2-methylsulfanyl-N(6)-dimethylallyladenosine(37) in tRNA + (sulfur carrier)-H + 5'-deoxyadenosine + L-methionine + A + S-adenosyl-L-homocysteine + 2 H(+). In terms of biological role, catalyzes the methylthiolation of N6-(dimethylallyl)adenosine (i(6)A), leading to the formation of 2-methylthio-N6-(dimethylallyl)adenosine (ms(2)i(6)A) at position 37 in tRNAs that read codons beginning with uridine. The chain is tRNA-2-methylthio-N(6)-dimethylallyladenosine synthase from Helicobacter pylori (strain J99 / ATCC 700824) (Campylobacter pylori J99).